Here is a 97-residue protein sequence, read N- to C-terminus: Acylphosphatase (97 aa).

Residues 9–95 (TRHLRIHGLV…CDAQGFEQRE (87 aa)) enclose the Acylphosphatase-like domain. Residues Arg24 and Asn42 contribute to the active site.

It belongs to the acylphosphatase family.

It catalyses the reaction an acyl phosphate + H2O = a carboxylate + phosphate + H(+). The protein is Acylphosphatase (acyP) of Acidovorax sp. (strain JS42).